Here is a 71-residue protein sequence, read N- to C-terminus: Small ribosomal subunit protein bS21 (71 aa).

Residues 43-71 form a disordered region; it reads TERKRAKASAVKRHAKKLARENARRTRLY. The span at 46–59 shows a compositional bias: basic residues; the sequence is KRAKASAVKRHAKK. Residues 60-71 show a composition bias toward basic and acidic residues; the sequence is LARENARRTRLY.

This sequence belongs to the bacterial ribosomal protein bS21 family.

The sequence is that of Small ribosomal subunit protein bS21 from Pectobacterium atrosepticum (strain SCRI 1043 / ATCC BAA-672) (Erwinia carotovora subsp. atroseptica).